Consider the following 631-residue polypeptide: 1-deoxy-D-xylulose-5-phosphate synthase (631 aa).

Residues histidine 87 and 128-130 (GHS) each bind thiamine diphosphate. Position 159 (aspartate 159) interacts with Mg(2+). Thiamine diphosphate-binding positions include 160 to 161 (GA), asparagine 188, phenylalanine 295, and glutamate 377. Residue asparagine 188 participates in Mg(2+) binding.

Belongs to the transketolase family. DXPS subfamily. In terms of assembly, homodimer. Requires Mg(2+) as cofactor. The cofactor is thiamine diphosphate.

The enzyme catalyses D-glyceraldehyde 3-phosphate + pyruvate + H(+) = 1-deoxy-D-xylulose 5-phosphate + CO2. It functions in the pathway metabolic intermediate biosynthesis; 1-deoxy-D-xylulose 5-phosphate biosynthesis; 1-deoxy-D-xylulose 5-phosphate from D-glyceraldehyde 3-phosphate and pyruvate: step 1/1. Catalyzes the acyloin condensation reaction between C atoms 2 and 3 of pyruvate and glyceraldehyde 3-phosphate to yield 1-deoxy-D-xylulose-5-phosphate (DXP). The sequence is that of 1-deoxy-D-xylulose-5-phosphate synthase from Pseudomonas entomophila (strain L48).